The sequence spans 793 residues: DnaJ homolog subfamily C member 10 (793 aa).

Residues 1–32 form the signal peptide; it reads MGVWLNRDEFIRDVKRISLCLLVLYVVIVVGT. The region spanning 35–100 is the J domain; the sequence is NFYSLLGVSK…DLRKKYDKYG (66 aa). The Thioredoxin 1 domain occupies 130 to 232; the sequence is EIITLERREF…ESLVSFAMQH (103 aa). Cysteines 158 and 161 form a disulfide. Trxb regions lie at residues 235–350 and 348–463; these read TTVT…LPDF and PDFE…PQNF. 3 consecutive Thioredoxin domains span residues 454–553, 557–665, and 671–776; these read HVTT…IEDL, SVVS…SWGL, and ASID…ALIY. Cys-480 and Cys-483 are joined by a disulfide. Asn-530 carries N-linked (GlcNAc...) asparagine glycosylation. Disulfide bonds link Cys-588–Cys-591 and Cys-700–Cys-703. The Prevents secretion from ER signature appears at 790-793; the sequence is KDEL.

As to quaternary structure, interacts with HSPA5 (via its J domain). Interacts with EDEM1.

The protein localises to the endoplasmic reticulum lumen. Endoplasmic reticulum disulfide reductase involved both in the correct folding of proteins and degradation of misfolded proteins. Required for efficient folding of proteins in the endoplasmic reticulum by catalyzing the removal of non-native disulfide bonds formed during the folding of proteins, such as LDLR. Also involved in endoplasmic reticulum-associated degradation (ERAD) by reducing incorrect disulfide bonds in misfolded glycoproteins recognized by EDEM1. Interaction with HSPA5 is required its activity, not for the disulfide reductase activity, but to facilitate the release of DNAJC10 from its substrate. Promotes apoptotic signaling pathway in response to endoplasmic reticulum stress. In Rattus norvegicus (Rat), this protein is DnaJ homolog subfamily C member 10 (Dnajc10).